Consider the following 614-residue polypeptide: Probable glycerol-3-phosphate dehydrogenase (614 aa).

57–85 (DLVVVGGGSTGAGCALDGATRGLKVALVD) is an FAD binding site. The tract at residues 595-614 (MECPEEKRHRGERRLPPQEK) is disordered. The segment covering 598–614 (PEEKRHRGERRLPPQEK) has biased composition (basic and acidic residues).

Belongs to the FAD-dependent glycerol-3-phosphate dehydrogenase family. It depends on FAD as a cofactor.

The protein resides in the cytoplasm. The catalysed reaction is a quinone + sn-glycerol 3-phosphate = dihydroxyacetone phosphate + a quinol. It functions in the pathway polyol metabolism; glycerol degradation via glycerol kinase pathway; glycerone phosphate from sn-glycerol 3-phosphate (anaerobic route): step 1/1. The polypeptide is Probable glycerol-3-phosphate dehydrogenase (Encephalitozoon cuniculi (strain GB-M1) (Microsporidian parasite)).